The chain runs to 179 residues: tRNA (cytidine(56)-2'-O)-methyltransferase (179 aa).

S-adenosyl-L-methionine-binding positions include Leu82, 110 to 114 (GAEKV), and 128 to 135 (VGNQPHSE).

It belongs to the aTrm56 family. As to quaternary structure, homodimer.

It is found in the cytoplasm. It carries out the reaction cytidine(56) in tRNA + S-adenosyl-L-methionine = 2'-O-methylcytidine(56) in tRNA + S-adenosyl-L-homocysteine + H(+). Its function is as follows. Specifically catalyzes the AdoMet-dependent 2'-O-ribose methylation of cytidine at position 56 in tRNAs. The protein is tRNA (cytidine(56)-2'-O)-methyltransferase of Methanocaldococcus jannaschii (strain ATCC 43067 / DSM 2661 / JAL-1 / JCM 10045 / NBRC 100440) (Methanococcus jannaschii).